The primary structure comprises 877 residues: Leucine--tRNA ligase (877 aa).

The 'HIGH' region motif lies at 50-60; that stretch reads PYPSGKLHMGH. The 'KMSKS' region motif lies at 634 to 638; it reads KMSKS. K637 contacts ATP.

Belongs to the class-I aminoacyl-tRNA synthetase family.

The protein localises to the cytoplasm. The catalysed reaction is tRNA(Leu) + L-leucine + ATP = L-leucyl-tRNA(Leu) + AMP + diphosphate. The sequence is that of Leucine--tRNA ligase from Hydrogenovibrio crunogenus (strain DSM 25203 / XCL-2) (Thiomicrospira crunogena).